Reading from the N-terminus, the 772-residue chain is Potassium transporter 24 (772 aa).

Residues 1–23 lie on the Cytoplasmic side of the membrane; it reads MDVEGGGAAARRKGGWWWWREEA. The helical transmembrane segment at 24-44 threads the bilayer; it reads VLAYQSLGVVYGEVAAAPLYV. Over 45–66 the chain is Extracellular; that stretch reads YRSAFAGGDIEHSAGNEEIYGA. The chain crosses the membrane as a helical span at residues 67–87; that stretch reads LSLVFWTLTLVPLAKYVLLVL. Residues 88 to 150 lie on the Cytoplasmic side of the membrane; sequence RADDAGEGGT…ALERHRVLQR (63 aa). Residues 151 to 171 form a helical membrane-spanning segment; the sequence is LLLLLALLGTCMVIGDGVLTP. Over 172–192 the chain is Extracellular; it reads AVSVFSAVSGLELSMDKDQHK. Residues 193 to 213 form a helical membrane-spanning segment; sequence YILLPITCVILVCLFALQHYG. Residues 214–216 lie on the Cytoplasmic side of the membrane; sequence THR. Residues 217-237 traverse the membrane as a helical segment; the sequence is VGFLFAPIVCLWLLCISIIGV. Over 238–265 the chain is Extracellular; the sequence is YNIIHWNPHVYQALSPYYMYKFLRKTQT. Residues 266 to 286 traverse the membrane as a helical segment; it reads GGWMSLGGILLCVTGSEAMYA. At 287–298 the chain is on the cytoplasmic side; it reads DLGHFTQNSIKM. A helical membrane pass occupies residues 299–319; it reads AFTLLVYPALVLAYMGQAAYI. At 320-344 the chain is on the extracellular side; it reads SRHHNFEDGSHIGFYVSVPEKIRWP. The helical transmembrane segment at 345 to 365 threads the bilayer; the sequence is VLGIAILASVVGSQAIITGTF. At 366–392 the chain is on the cytoplasmic side; that stretch reads SIIKQCSSLNCFPRVKIVHTSSTVHGQ. A helical transmembrane segment spans residues 393–413; sequence IYIPEINWILMILCLSVTIGF. Residues 414–423 lie on the Extracellular side of the membrane; that stretch reads RDTKHLTNAQ. Residues 424–444 traverse the membrane as a helical segment; that stretch reads GLAVITVMLVTTCLMSLVILL. At 445–449 the chain is on the cytoplasmic side; sequence CWNKS. A helical transmembrane segment spans residues 450–470; it reads IVYALSFLLFFGAIEVIYFAA. Over 471 to 477 the chain is Extracellular; that stretch reads SLVKFHE. The chain crosses the membrane as a helical span at residues 478–498; it reads GAWVPVTLSFIFMMVMCVWHY. At 499 to 772 the chain is on the cytoplasmic side; the sequence is GTKKKYEFDV…TVEVGMICLV (274 aa). A disordered region spans residues 656–684; the sequence is EEGEFDGSDSTGSSAHKEINPNTTAPKPK.

The protein belongs to the HAK/KUP transporter (TC 2.A.72.3) family.

It localises to the membrane. In terms of biological role, high-affinity potassium transporter. The chain is Potassium transporter 24 (HAK24) from Oryza sativa subsp. japonica (Rice).